Here is a 186-residue protein sequence, read N- to C-terminus: Oligoribonuclease (186 aa).

The 164-residue stretch at Leu-12–Leu-175 folds into the Exonuclease domain. Tyr-133 is an active-site residue.

The protein belongs to the oligoribonuclease family.

It localises to the cytoplasm. Functionally, 3'-to-5' exoribonuclease specific for small oligoribonucleotides. This Wigglesworthia glossinidia brevipalpis protein is Oligoribonuclease.